Reading from the N-terminus, the 643-residue chain is Alpha-dioxygenase 1 (643 aa).

The active-site Proton acceptor is the His167. Residue Asp168 coordinates Ca(2+). Residue His172 coordinates heme b. Thr220, Trp222, Asp224, and Ser226 together coordinate Ca(2+). The heme b site is built by His392, Arg489, and Arg493.

Belongs to the peroxidase family. Requires heme b as cofactor. It depends on Ca(2+) as a cofactor.

Its function is as follows. Alpha-dioxygenase that catalyzes the primary oxygenation step of a variety of 14-20 carbon fatty acids, containing up to three unsaturated bonds, into their corresponding 2R-hydroperoxides. Involved in the production of oxylipins that function in cell signaling, wound healing, and protection from infection. The lipid-derived signaling pathway is involved in the initial response of hot pepper plants to pathogen infection. The sequence is that of Alpha-dioxygenase 1 from Capsicum annuum (Capsicum pepper).